We begin with the raw amino-acid sequence, 622 residues long: Probable potassium transport system protein Kup (622 aa).

12 consecutive transmembrane segments (helical) span residues 7 to 27, 44 to 64, 95 to 115, 133 to 153, 165 to 185, 199 to 219, 243 to 263, 290 to 310, 338 to 358, 370 to 390, 395 to 415, and 422 to 442; these read LAIGAIGIVFGDIGTSPLYAF, VLGVVSLIFWSMTLIVAIQYV, GWLVVLLGVFATSLFYGDSMI, PELQGFVIPIALVLLVGLFVL, FAPVMIVYFTVIATLGLISIV, AVLFFINDGFLAFLALGSVVL, WFGFVMPCLLLNYFGQGAMIV, LVILATFATFIASQAVISGAF, IYIPVINWALMVAVILLVLTF, IAVTGAVTIDTLLMAVLLVGV, WYYAAPVVIVFLIIDGAYFAA, and DGGWFPLVVGLIVFTLLTTWA.

It belongs to the HAK/KUP transporter (TC 2.A.72) family.

Its subcellular location is the cell inner membrane. It carries out the reaction K(+)(in) + H(+)(in) = K(+)(out) + H(+)(out). In terms of biological role, transport of potassium into the cell. Likely operates as a K(+):H(+) symporter. This Erythrobacter litoralis (strain HTCC2594) protein is Probable potassium transport system protein Kup.